Consider the following 2238-residue polypeptide: Golgin subfamily A member 4 (2238 aa).

The tract at residues 1 to 90 (MFKKLKQKIS…QTFAQKLQLR (90 aa)) is disordered. Position 10 is a phosphoserine (Ser-10). The segment covering 12–41 (EQQQLQQALAPAQASSSSSTPTRTRSRTSS) has biased composition (low complexity). The residue at position 39 (Thr-39) is a Phosphothreonine. A Phosphoserine modification is found at Ser-41. Composition is skewed to polar residues over residues 52 to 62 (NRENASTQATK) and 73 to 85 (SPSQ…TFAQ). 2 positions are modified to phosphoserine: Ser-93 and Ser-100. Disordered stretches follow at residues 132-154 (AAAF…NSDG), 1695-1744 (LKER…SQDC), and 1770-1789 (LEQG…HRAL). Residues 154 to 224 (GLSREQLLQR…EELQMDQQAK (71 aa)) are interaction with MACF1. Positions 156-2161 (SREQLLQRLR…RYEKNACAAT (2006 aa)) form a coiled coil. Basic and acidic residues predominate over residues 1695-1711 (LKEREKQVHSLEDKLKN). A GRIP domain is found at 2178 to 2225 (LFGEPTEFEYLRKVMFEYMMGRETKTMAKVITTVLKFPDDQAQKILER).

As to quaternary structure, homodimer. Interacts with GTP-bound ARL1 and ARL3. Interacts with MACF1. Directly interacts with TBC1D23. Interacts with FAM91A1; this interaction may be mediated by TBC1D23. Ubiquitous. Highly expressed in oligodendrocyte precursors, particularly at a stage just prior to myelination.

Its subcellular location is the cytoplasm. It localises to the golgi apparatus membrane. The protein resides in the golgi apparatus. The protein localises to the trans-Golgi network membrane. Involved in vesicular trafficking at the Golgi apparatus level. May play a role in delivery of transport vesicles containing GPI-linked proteins from the trans-Golgi network through its interaction with MACF1. Involved in endosome-to-Golgi trafficking. This Mus musculus (Mouse) protein is Golgin subfamily A member 4 (Golga4).